We begin with the raw amino-acid sequence, 340 residues long: UDP-3-O-acylglucosamine N-acyltransferase (340 aa).

Residue His-237 is the Proton acceptor of the active site.

The protein belongs to the transferase hexapeptide repeat family. LpxD subfamily. Homotrimer.

It carries out the reaction a UDP-3-O-[(3R)-3-hydroxyacyl]-alpha-D-glucosamine + a (3R)-hydroxyacyl-[ACP] = a UDP-2-N,3-O-bis[(3R)-3-hydroxyacyl]-alpha-D-glucosamine + holo-[ACP] + H(+). It participates in bacterial outer membrane biogenesis; LPS lipid A biosynthesis. Its function is as follows. Catalyzes the N-acylation of UDP-3-O-acylglucosamine using 3-hydroxyacyl-ACP as the acyl donor. Is involved in the biosynthesis of lipid A, a phosphorylated glycolipid that anchors the lipopolysaccharide to the outer membrane of the cell. The sequence is that of UDP-3-O-acylglucosamine N-acyltransferase from Desulfosudis oleivorans (strain DSM 6200 / JCM 39069 / Hxd3) (Desulfococcus oleovorans).